The following is a 249-amino-acid chain: Indole-3-glycerol phosphate synthase (249 aa).

This sequence belongs to the TrpC family.

It catalyses the reaction 1-(2-carboxyphenylamino)-1-deoxy-D-ribulose 5-phosphate + H(+) = (1S,2R)-1-C-(indol-3-yl)glycerol 3-phosphate + CO2 + H2O. The protein operates within amino-acid biosynthesis; L-tryptophan biosynthesis; L-tryptophan from chorismate: step 4/5. This Pyrobaculum aerophilum (strain ATCC 51768 / DSM 7523 / JCM 9630 / CIP 104966 / NBRC 100827 / IM2) protein is Indole-3-glycerol phosphate synthase.